The primary structure comprises 352 residues: N-acetyl-gamma-glutamyl-phosphate reductase (352 aa).

Residue cysteine 155 is part of the active site.

Belongs to the NAGSA dehydrogenase family. Type 1 subfamily.

The protein localises to the cytoplasm. It carries out the reaction N-acetyl-L-glutamate 5-semialdehyde + phosphate + NADP(+) = N-acetyl-L-glutamyl 5-phosphate + NADPH + H(+). It participates in amino-acid biosynthesis; L-arginine biosynthesis; N(2)-acetyl-L-ornithine from L-glutamate: step 3/4. Its function is as follows. Catalyzes the NADPH-dependent reduction of N-acetyl-5-glutamyl phosphate to yield N-acetyl-L-glutamate 5-semialdehyde. In Crocosphaera subtropica (strain ATCC 51142 / BH68) (Cyanothece sp. (strain ATCC 51142)), this protein is N-acetyl-gamma-glutamyl-phosphate reductase.